Reading from the N-terminus, the 212-residue chain is MLADHQIPEQSMDEEERTSSRGWMREFKYPSNLRDITEEARISLSSVAHCGGVDELLHESSELAWRTNMSPPHRALFTFSKKTDISYVMLFLDYSRDESYCPQEVRIDLGDGTNDWWLKMYRRVDQPKGWVKIPIHDAFGNPLRVMSLQMTIMKNHEKGRDCVVRHFRVLGPFRSRYDSMNRMILGPSAVLEARPGTEPIKDAIMNHYQSMR.

A DOC domain is found at 12–196; sequence MDEEERTSSR…PSAVLEARPG (185 aa).

It belongs to the APC10 family. As to quaternary structure, the APC/C complex is probably composed of at least 12 subunits: apc-2, apc-10, apc-11, cdc-26, emb-1, emb-27, emb-30, mat-1, mat-2, mat-3, such-1 and gfi-3.

The protein operates within protein modification; protein ubiquitination. Probable component of the anaphase promoting complex/cyclosome (APC/C), a cell cycle-regulated E3 ubiquitin ligase that controls progression through mitosis and the G1 phase of the cell cycle. The APC/C complex acts by mediating ubiquitination and subsequent degradation of target proteins. This is Anaphase-promoting complex subunit 10 from Caenorhabditis elegans.